Reading from the N-terminus, the 393-residue chain is Probable acetyl-CoA acetyltransferase (393 aa).

C88 acts as the Acyl-thioester intermediate in catalysis. Catalysis depends on proton acceptor residues H349 and C379.

The protein belongs to the thiolase-like superfamily. Thiolase family.

It carries out the reaction 2 acetyl-CoA = acetoacetyl-CoA + CoA. This Mycobacterium leprae (strain TN) protein is Probable acetyl-CoA acetyltransferase (fadA4).